The following is a 136-amino-acid chain: Prefoldin subunit alpha (136 aa).

Belongs to the prefoldin subunit alpha family. As to quaternary structure, heterohexamer of two alpha and four beta subunits.

It localises to the cytoplasm. In terms of biological role, molecular chaperone capable of stabilizing a range of proteins. Seems to fulfill an ATP-independent, HSP70-like function in archaeal de novo protein folding. This is Prefoldin subunit alpha from Pyrobaculum arsenaticum (strain DSM 13514 / JCM 11321 / PZ6).